A 458-amino-acid polypeptide reads, in one-letter code: Argininosuccinate lyase (458 aa).

It belongs to the lyase 1 family. Argininosuccinate lyase subfamily.

It localises to the cytoplasm. It carries out the reaction 2-(N(omega)-L-arginino)succinate = fumarate + L-arginine. It participates in amino-acid biosynthesis; L-arginine biosynthesis; L-arginine from L-ornithine and carbamoyl phosphate: step 3/3. The chain is Argininosuccinate lyase from Buchnera aphidicola subsp. Baizongia pistaciae (strain Bp).